The following is a 202-amino-acid chain: Guanylate kinase (202 aa).

In terms of domain architecture, Guanylate kinase-like spans 3 to 181; it reads GNLFIITAPS…ALEDLRAIIR (179 aa). 10–17 contributes to the ATP binding site; it reads APSGAGKT.

The protein belongs to the guanylate kinase family.

It is found in the cytoplasm. The catalysed reaction is GMP + ATP = GDP + ADP. Its function is as follows. Essential for recycling GMP and indirectly, cGMP. This Methylobacillus flagellatus (strain ATCC 51484 / DSM 6875 / VKM B-1610 / KT) protein is Guanylate kinase.